Here is a 410-residue protein sequence, read N- to C-terminus: LL-diaminopimelate aminotransferase (410 aa).

Substrate contacts are provided by Tyr-15 and Gly-42. Residues Tyr-72, Ala-108–Lys-109, Tyr-132, Asn-188, Tyr-219, and Ser-247–Ser-249 each bind pyridoxal 5'-phosphate. Positions 109, 132, and 188 each coordinate substrate. Lys-250 carries the N6-(pyridoxal phosphate)lysine modification. Pyridoxal 5'-phosphate-binding residues include Arg-258 and Asn-293. 2 residues coordinate substrate: Asn-293 and Arg-389.

It belongs to the class-I pyridoxal-phosphate-dependent aminotransferase family. LL-diaminopimelate aminotransferase subfamily. In terms of assembly, homodimer. Pyridoxal 5'-phosphate is required as a cofactor.

It carries out the reaction (2S,6S)-2,6-diaminopimelate + 2-oxoglutarate = (S)-2,3,4,5-tetrahydrodipicolinate + L-glutamate + H2O + H(+). It functions in the pathway amino-acid biosynthesis; L-lysine biosynthesis via DAP pathway; LL-2,6-diaminopimelate from (S)-tetrahydrodipicolinate (aminotransferase route): step 1/1. Its function is as follows. Involved in the synthesis of meso-diaminopimelate (m-DAP or DL-DAP), required for both lysine and peptidoglycan biosynthesis. Catalyzes the direct conversion of tetrahydrodipicolinate to LL-diaminopimelate. The polypeptide is LL-diaminopimelate aminotransferase (Bacteroides thetaiotaomicron (strain ATCC 29148 / DSM 2079 / JCM 5827 / CCUG 10774 / NCTC 10582 / VPI-5482 / E50)).